The following is a 73-amino-acid chain: Disintegrin trigramin-beta-2 (73 aa).

Residues 1–73 form the Disintegrin domain; the sequence is EAGKDCDCGS…AGCPRNPFHA (73 aa). Cystine bridges form between cysteine 6–cysteine 21, cysteine 8–cysteine 16, cysteine 15–cysteine 38, cysteine 29–cysteine 35, cysteine 34–cysteine 59, and cysteine 47–cysteine 66. A Cell attachment site motif is present at residues 51-53; it reads RGD.

The protein belongs to the venom metalloproteinase (M12B) family. P-II subfamily. P-IIa sub-subfamily. Monomer (disintegrin). Expressed by the venom gland.

Its subcellular location is the secreted. Inhibits fibrinogen interaction with platelets. Acts by binding to the alpha-IIb/beta-3 receptor (ITGA2B/ITGB3) on the platelet surface and inhibits aggregation induced by ADP, thrombin, platelet-activating factor and collagen. In Craspedocephalus gramineus (Bamboo pit viper), this protein is Disintegrin trigramin-beta-2.